We begin with the raw amino-acid sequence, 361 residues long: Velvet complex subunit B (361 aa).

In terms of domain architecture, Velvet spans 1–336 (MIVRTEDQKL…GNQGQKLPLR (336 aa)). Disordered stretches follow at residues 42 to 222 (PSST…NNIP) and 327 to 361 (GNQG…EDDS). 2 stretches are compositionally biased toward low complexity: residues 57–74 (PSAS…SRPP) and 93–107 (PPSS…SQSQ). Positions 108 to 127 (DNLTPSSPYPPHSNSEQPQT) are enriched in polar residues. Positions 130–147 (YPPPPPIDRAAPFPPPVL) are enriched in pro residues. 3 stretches are compositionally biased toward polar residues: residues 149 to 168 (SIQS…NNDD), 181 to 196 (GYTN…YGSG), and 212 to 222 (SGNATPQNNIP). The span at 335 to 349 (LRNRHGTGSKRRRRN) shows a compositional bias: basic residues.

The protein belongs to the velvet family. VelB subfamily. Component of the heterotrimeric velvet complex composed of laeA, veA and velB; VeA acting as a bridging protein between laeA and velB. Forms a heterodimeric complex with vosA; the formation of the velB-vosA complex is light-dependent.

It localises to the nucleus. The protein resides in the cytoplasm. In terms of biological role, component of the velvet transcription factor complex that controls sexual/asexual developmental ratio in response to light, promoting sexual development in the darkness while stimulating asexual sporulation under illumination. The velvet complex acts as a global regulator for secondary metabolite gene expression. Component of the velB-VosA heterodimeric complex that plays a dual role in activating genes associated with spore maturation and repressing certain development-associated genes. The velB-VosA complex binds DNA through the DNA-binding domain of vosA that recognizes an 11-nucleotide consensus sequence 5'-CTGGCCGCGGC-3' consisting of two motifs in the promoters of key developmental regulatory genes. In Coprinopsis cinerea (strain Okayama-7 / 130 / ATCC MYA-4618 / FGSC 9003) (Inky cap fungus), this protein is Velvet complex subunit B.